We begin with the raw amino-acid sequence, 88 residues long: Small ribosomal subunit protein uS15 (88 aa).

The protein belongs to the universal ribosomal protein uS15 family. As to quaternary structure, part of the 30S ribosomal subunit. Forms a bridge to the 50S subunit in the 70S ribosome, contacting the 23S rRNA.

Its function is as follows. One of the primary rRNA binding proteins, it binds directly to 16S rRNA where it helps nucleate assembly of the platform of the 30S subunit by binding and bridging several RNA helices of the 16S rRNA. Forms an intersubunit bridge (bridge B4) with the 23S rRNA of the 50S subunit in the ribosome. In Mesomycoplasma hyopneumoniae (strain 232) (Mycoplasma hyopneumoniae), this protein is Small ribosomal subunit protein uS15.